The following is a 470-amino-acid chain: Uronate isomerase (470 aa).

The protein belongs to the metallo-dependent hydrolases superfamily. Uronate isomerase family.

It carries out the reaction D-glucuronate = D-fructuronate. It catalyses the reaction aldehydo-D-galacturonate = keto-D-tagaturonate. It functions in the pathway carbohydrate metabolism; pentose and glucuronate interconversion. The protein is Uronate isomerase of Escherichia coli O17:K52:H18 (strain UMN026 / ExPEC).